The chain runs to 669 residues: GTP-binding protein 1 (669 aa).

Residues 1-32 form a disordered region; it reads MATERSRSAMDSPVPASMFAPEPSSPGAARAA. S6, S8, S12, S24, S25, S44, S47, and S69 each carry phosphoserine. In terms of domain architecture, tr-type G spans 158-389; sequence FLEVRVAVVG…LNLLSPRTSY (232 aa). A G1 region spans residues 167-174; it reads GNVDAGKS. 167–174 serves as a coordination point for GTP; the sequence is GNVDAGKS. The G2 stretch occupies residues 206–210; that stretch reads GRTSS. Positions 252–255 are G3; sequence DLAG. Residues 252–256 and 308–311 contribute to the GTP site; these read DLAGH and TKID. The interval 308 to 311 is G4; it reads TKID. The segment at 366-368 is G5; that stretch reads SNV. Over residues 573–595 the composition is skewed to polar residues; the sequence is LLQTTNNSPMNSKPQQIKMQSTK. Residues 573 to 669 form a disordered region; that stretch reads LLQTTNNSPM…GACVTPASGC (97 aa). At S580 the chain carries Phosphoserine. Residues 646–657 show a composition bias toward basic residues; it reads GRRRGGQRHKVK.

Belongs to the TRAFAC class translation factor GTPase superfamily. Classic translation factor GTPase family. GTPBP1 subfamily. In terms of assembly, interacts with EXOSC2/RRP4, EXOSC3/RRP40, EXOSC5/RRP46, HNRNPD, HNRNPR and SYNCRIP. Identified in a complex with AANAT mRNA, but does not bind mRNA by itself.

The protein resides in the cytoplasm. Promotes degradation of target mRNA species. Plays a role in the regulation of circadian mRNA stability. Binds GTP and has GTPase activity. The protein is GTP-binding protein 1 (GTPBP1) of Homo sapiens (Human).